We begin with the raw amino-acid sequence, 349 residues long: Ribosomal RNA small subunit methyltransferase H 1 (349 aa).

S-adenosyl-L-methionine-binding positions include 79-81 (GGH), D99, F129, D148, and Q155.

This sequence belongs to the methyltransferase superfamily. RsmH family.

Its subcellular location is the cytoplasm. It catalyses the reaction cytidine(1402) in 16S rRNA + S-adenosyl-L-methionine = N(4)-methylcytidine(1402) in 16S rRNA + S-adenosyl-L-homocysteine + H(+). Specifically methylates the N4 position of cytidine in position 1402 (C1402) of 16S rRNA. The polypeptide is Ribosomal RNA small subunit methyltransferase H 1 (Agathobacter rectalis (strain ATCC 33656 / DSM 3377 / JCM 17463 / KCTC 5835 / VPI 0990) (Eubacterium rectale)).